The sequence spans 239 residues: tRNA (guanine-N(7)-)-methyltransferase (239 aa).

Glu-69, Glu-94, Asp-121, and Asp-144 together coordinate S-adenosyl-L-methionine. Residue Asp-144 is part of the active site. Residue Lys-148 participates in substrate binding. Residues 150–155 (RHNKRR) form an interaction with RNA region. Substrate contacts are provided by residues Asp-180 and 217 to 220 (TKFE).

The protein belongs to the class I-like SAM-binding methyltransferase superfamily. TrmB family. As to quaternary structure, monomer.

The catalysed reaction is guanosine(46) in tRNA + S-adenosyl-L-methionine = N(7)-methylguanosine(46) in tRNA + S-adenosyl-L-homocysteine. It functions in the pathway tRNA modification; N(7)-methylguanine-tRNA biosynthesis. Functionally, catalyzes the formation of N(7)-methylguanine at position 46 (m7G46) in tRNA. This is tRNA (guanine-N(7)-)-methyltransferase from Cronobacter sakazakii (strain ATCC BAA-894) (Enterobacter sakazakii).